Here is a 144-residue protein sequence, read N- to C-terminus: Large ribosomal subunit protein uL15 (144 aa).

Positions 1–54 (MRLNTIKPGEGSKKTAKRVGRGIGSGLGKTCGRGHKGQKSRSGGFHKVGFEGGQ) are disordered. A compositionally biased stretch (gly residues) spans 21 to 31 (RGIGSGLGKTC).

Belongs to the universal ribosomal protein uL15 family. Part of the 50S ribosomal subunit.

Functionally, binds to the 23S rRNA. This chain is Large ribosomal subunit protein uL15, found in Dechloromonas aromatica (strain RCB).